Here is a 193-residue protein sequence, read N- to C-terminus: Probable molybdenum cofactor guanylyltransferase (193 aa).

GTP-binding positions include 9-11 (TAG), Lys21, Asp64, and Asp93. Asp93 contacts Mg(2+).

It belongs to the MobA family. It depends on Mg(2+) as a cofactor.

It localises to the cytoplasm. It carries out the reaction Mo-molybdopterin + GTP + H(+) = Mo-molybdopterin guanine dinucleotide + diphosphate. In terms of biological role, transfers a GMP moiety from GTP to Mo-molybdopterin (Mo-MPT) cofactor (Moco or molybdenum cofactor) to form Mo-molybdopterin guanine dinucleotide (Mo-MGD) cofactor. The sequence is that of Probable molybdenum cofactor guanylyltransferase from Deinococcus radiodurans (strain ATCC 13939 / DSM 20539 / JCM 16871 / CCUG 27074 / LMG 4051 / NBRC 15346 / NCIMB 9279 / VKM B-1422 / R1).